A 178-amino-acid chain; its full sequence is Cytochrome b6-f complex iron-sulfur subunit 3 (178 aa).

The chain crosses the membrane as a helical span at residues 20-42 (FITGATVAVTAGAALYPAGKFLI). In terms of domain architecture, Rieske spans 65–161 (PASQILAEPP…VAVIDNSILI (97 aa)). The [2Fe-2S] cluster site is built by C107, H109, C125, and H128. C112 and C127 are joined by a disulfide.

This sequence belongs to the Rieske iron-sulfur protein family. The 4 large subunits of the cytochrome b6-f complex are cytochrome b6, subunit IV (17 kDa polypeptide, PetD), cytochrome f and the Rieske protein, while the 4 small subunits are PetG, PetL, PetM and PetN. The complex functions as a dimer. It depends on [2Fe-2S] cluster as a cofactor.

It is found in the cellular thylakoid membrane. It catalyses the reaction 2 oxidized [plastocyanin] + a plastoquinol + 2 H(+)(in) = 2 reduced [plastocyanin] + a plastoquinone + 4 H(+)(out). Its function is as follows. Component of the cytochrome b6-f complex, which mediates electron transfer between photosystem II (PSII) and photosystem I (PSI), cyclic electron flow around PSI, and state transitions. The chain is Cytochrome b6-f complex iron-sulfur subunit 3 from Nostoc sp. (strain PCC 7120 / SAG 25.82 / UTEX 2576).